We begin with the raw amino-acid sequence, 75 residues long: Large ribosomal subunit protein bL31 (75 aa).

Belongs to the bacterial ribosomal protein bL31 family. Type A subfamily. In terms of assembly, part of the 50S ribosomal subunit.

In terms of biological role, binds the 23S rRNA. The chain is Large ribosomal subunit protein bL31 from Chlorobium phaeovibrioides (strain DSM 265 / 1930) (Prosthecochloris vibrioformis (strain DSM 265)).